The chain runs to 356 residues: DNA polymerase IV (356 aa).

In terms of domain architecture, UmuC spans 1–188; the sequence is MDTSRKIIHI…IPVTKFYGVG (188 aa). 2 residues coordinate Mg(2+): Asp11 and Asp106. Residue Glu107 is part of the active site.

It belongs to the DNA polymerase type-Y family. In terms of assembly, monomer. The cofactor is Mg(2+).

It is found in the cytoplasm. The catalysed reaction is DNA(n) + a 2'-deoxyribonucleoside 5'-triphosphate = DNA(n+1) + diphosphate. Functionally, poorly processive, error-prone DNA polymerase involved in untargeted mutagenesis. Copies undamaged DNA at stalled replication forks, which arise in vivo from mismatched or misaligned primer ends. These misaligned primers can be extended by PolIV. Exhibits no 3'-5' exonuclease (proofreading) activity. May be involved in translesional synthesis, in conjunction with the beta clamp from PolIII. This chain is DNA polymerase IV, found in Listeria monocytogenes serovar 1/2a (strain ATCC BAA-679 / EGD-e).